The sequence spans 184 residues: Photosystem I assembly protein Ycf4 (184 aa).

The next 2 membrane-spanning stretches (helical) occupy residues 22-42 (FCWACILFLGSIGFLLVGISS) and 57-77 (ILFFPQGIVMCFYGIAGLFIS).

The protein belongs to the Ycf4 family.

The protein resides in the plastid. It localises to the chloroplast thylakoid membrane. In terms of biological role, seems to be required for the assembly of the photosystem I complex. The protein is Photosystem I assembly protein Ycf4 of Illicium oligandrum (Star anise).